A 568-amino-acid chain; its full sequence is MSSSSIEDIKGKSHRLRGSLLESLANPTTGALGESDQTLIKYHGSYQQDDRDLREERRRQKLEPAYQFMIRTRTPGGVITPQQWLQLDAIATRYANHSLRVTTRQAFQFHGVIKRELKTTMQAINAALIDTLAACGDVNRNVQVAANPLLSRAHADLYTDAAHLSEHLLPNTRAYYEIWLDEKKVAGAGEEEEPIYGPHYLPRKFKIGFAAPPINDVDVFANDLGFIAVIVDNTLLGYNVTIGGGMGTTHGDPDTWPRVGNIIGFITRADLITISTAIVTTQRDFGNRTLRKRARFKYTIDDRGLDCIVGEIQQRAGITLQPARPFVFEHNGDRYGWIEGEDGHWHLTLSLPAGRIADTEGSTLLSGFREIAQLGIGEFRMTPNQNVVIAGISPGQRAAIDALVTQYGLDTGNRAPTALGRHAMACVALPTCGLAMAEAERYLPDFNAKLQPILEKYGLAEAPILLRISGCPNGCSRPYLAEIALVGKAPGRYNLMLGGDQRGQRLNTLYRENITETEILAALEPLLGRYQQKRLPSEGFGDFLHRTGIIALPPYPTHRHVISSTLQA.

[4Fe-4S] cluster-binding residues include Cys426, Cys432, Cys471, and Cys475. Cys475 contributes to the siroheme binding site.

The protein belongs to the nitrite and sulfite reductase 4Fe-4S domain family. As to quaternary structure, alpha(8)-beta(8). The alpha component is a flavoprotein, the beta component is a hemoprotein. Siroheme is required as a cofactor. Requires [4Fe-4S] cluster as cofactor.

It catalyses the reaction hydrogen sulfide + 3 NADP(+) + 3 H2O = sulfite + 3 NADPH + 4 H(+). It functions in the pathway sulfur metabolism; hydrogen sulfide biosynthesis; hydrogen sulfide from sulfite (NADPH route): step 1/1. Its function is as follows. Component of the sulfite reductase complex that catalyzes the 6-electron reduction of sulfite to sulfide. This is one of several activities required for the biosynthesis of L-cysteine from sulfate. The polypeptide is Sulfite reductase [NADPH] hemoprotein beta-component (Xylella fastidiosa (strain M23)).